Consider the following 482-residue polypeptide: Catalase (482 aa).

Over residues 1–23 (MSQNKTLTTASGPPVADNQNSRS) the composition is skewed to polar residues. Residues 1 to 28 (MSQNKTLTTASGPPVADNQNSRSAGPRG) are disordered. Catalysis depends on residues His55 and Asn128. Tyr338 serves as a coordination point for heme. The tract at residues 370 to 395 (SMAFGSNGGAAPNYEPNSYADAPKQA) is disordered.

It belongs to the catalase family. The cofactor is heme.

It carries out the reaction 2 H2O2 = O2 + 2 H2O. In terms of biological role, decomposes hydrogen peroxide into water and oxygen; serves to protect cells from the toxic effects of hydrogen peroxide. The sequence is that of Catalase (cat) from Onchocerca volvulus endobacterium.